The primary structure comprises 386 residues: Acetate kinase (386 aa).

Asparagine 9 is a Mg(2+) binding site. Residue lysine 16 participates in ATP binding. Arginine 74 serves as a coordination point for substrate. Catalysis depends on aspartate 131, which acts as the Proton donor/acceptor. Residues histidine 191–glycine 195, aspartate 265–arginine 267, and glycine 313–asparagine 317 contribute to the ATP site. Glutamate 367 contacts Mg(2+).

Belongs to the acetokinase family. Homodimer. The cofactor is Mg(2+). Mn(2+) is required as a cofactor.

The protein resides in the cytoplasm. It catalyses the reaction acetate + ATP = acetyl phosphate + ADP. It functions in the pathway metabolic intermediate biosynthesis; acetyl-CoA biosynthesis; acetyl-CoA from acetate: step 1/2. Catalyzes the formation of acetyl phosphate from acetate and ATP. Can also catalyze the reverse reaction. The polypeptide is Acetate kinase (Mycolicibacterium gilvum (strain PYR-GCK) (Mycobacterium gilvum (strain PYR-GCK))).